We begin with the raw amino-acid sequence, 359 residues long: Halocin-H4 (359 aa).

An N-terminal signal peptide occupies residues 1–46; sequence MSKDRDGRRTSRRGTLKKIGGFSLGALSFGAVGRTQAATGSSVTTA. Disordered regions lie at residues 40-59 and 340-359; these read GSSV…DPKS and IPDR…SRKQ.

Its subcellular location is the secreted. Has antibacterial activity against other haloarchaeons. Interacts with the membrane of the target cells where it causes permeability changes that result in an ionic imbalance leading to cell lysis and death. The chain is Halocin-H4 (halH4) from Haloferax mediterranei (strain ATCC 33500 / DSM 1411 / JCM 8866 / NBRC 14739 / NCIMB 2177 / R-4) (Halobacterium mediterranei).